A 627-amino-acid chain; its full sequence is tRNA uridine 5-carboxymethylaminomethyl modification enzyme MnmG (627 aa).

FAD contacts are provided by residues 13 to 18, Val-125, and Ser-180; that span reads GGGHAG. 274–288 contacts NAD(+); sequence GPRYCPSIEDKVVRF. Gln-371 lines the FAD pocket.

Belongs to the MnmG family. As to quaternary structure, homodimer. Heterotetramer of two MnmE and two MnmG subunits. The cofactor is FAD.

The protein localises to the cytoplasm. Functionally, NAD-binding protein involved in the addition of a carboxymethylaminomethyl (cmnm) group at the wobble position (U34) of certain tRNAs, forming tRNA-cmnm(5)s(2)U34. The sequence is that of tRNA uridine 5-carboxymethylaminomethyl modification enzyme MnmG from Francisella tularensis subsp. tularensis (strain FSC 198).